Consider the following 356-residue polypeptide: UDP-N-acetylglucosamine--N-acetylmuramyl-(pentapeptide) pyrophosphoryl-undecaprenol N-acetylglucosamine transferase (356 aa).

Residues 12-14, Asn124, Arg163, Ser188, Ile242, 261-266, and Gln287 each bind UDP-N-acetyl-alpha-D-glucosamine; these read TGG and ALTVSE.

This sequence belongs to the glycosyltransferase 28 family. MurG subfamily.

The protein localises to the cell inner membrane. It carries out the reaction di-trans,octa-cis-undecaprenyl diphospho-N-acetyl-alpha-D-muramoyl-L-alanyl-D-glutamyl-meso-2,6-diaminopimeloyl-D-alanyl-D-alanine + UDP-N-acetyl-alpha-D-glucosamine = di-trans,octa-cis-undecaprenyl diphospho-[N-acetyl-alpha-D-glucosaminyl-(1-&gt;4)]-N-acetyl-alpha-D-muramoyl-L-alanyl-D-glutamyl-meso-2,6-diaminopimeloyl-D-alanyl-D-alanine + UDP + H(+). Its pathway is cell wall biogenesis; peptidoglycan biosynthesis. In terms of biological role, cell wall formation. Catalyzes the transfer of a GlcNAc subunit on undecaprenyl-pyrophosphoryl-MurNAc-pentapeptide (lipid intermediate I) to form undecaprenyl-pyrophosphoryl-MurNAc-(pentapeptide)GlcNAc (lipid intermediate II). This chain is UDP-N-acetylglucosamine--N-acetylmuramyl-(pentapeptide) pyrophosphoryl-undecaprenol N-acetylglucosamine transferase, found in Pseudomonas fluorescens (strain ATCC BAA-477 / NRRL B-23932 / Pf-5).